A 792-amino-acid chain; its full sequence is 5-methyltetrahydropteroyltriglutamate--homocysteine methyltransferase (792 aa).

Residues 16 to 19 (RELK) and lysine 112 each bind 5-methyltetrahydropteroyltri-L-glutamate. L-homocysteine-binding positions include 432–434 (IGS) and glutamate 485. Residues 432–434 (IGS) and glutamate 485 contribute to the L-methionine site. Residues 516–517 (RC) and tryptophan 562 each bind 5-methyltetrahydropteroyltri-L-glutamate. L-homocysteine is bound at residue aspartate 600. An L-methionine-binding site is contributed by aspartate 600. Glutamate 606 contacts 5-methyltetrahydropteroyltri-L-glutamate. Histidine 642, cysteine 644, and glutamate 666 together coordinate Zn(2+). The active-site Proton donor is histidine 695. Zn(2+) is bound at residue cysteine 727.

The protein belongs to the vitamin-B12 independent methionine synthase family. Zn(2+) is required as a cofactor.

It carries out the reaction 5-methyltetrahydropteroyltri-L-glutamate + L-homocysteine = tetrahydropteroyltri-L-glutamate + L-methionine. Its pathway is amino-acid biosynthesis; L-methionine biosynthesis via de novo pathway; L-methionine from L-homocysteine (MetE route): step 1/1. Its function is as follows. Catalyzes the transfer of a methyl group from 5-methyltetrahydrofolate to homocysteine resulting in methionine formation. The sequence is that of 5-methyltetrahydropteroyltriglutamate--homocysteine methyltransferase from Cupriavidus necator (Alcaligenes eutrophus).